The primary structure comprises 72 residues: DNA-directed RNA polymerase subunit omega (72 aa).

This sequence belongs to the RNA polymerase subunit omega family. The RNAP catalytic core consists of 2 alpha, 1 beta, 1 beta' and 1 omega subunit. When a sigma factor is associated with the core the holoenzyme is formed, which can initiate transcription.

It catalyses the reaction RNA(n) + a ribonucleoside 5'-triphosphate = RNA(n+1) + diphosphate. Its function is as follows. Promotes RNA polymerase assembly. Latches the N- and C-terminal regions of the beta' subunit thereby facilitating its interaction with the beta and alpha subunits. This is DNA-directed RNA polymerase subunit omega from Francisella tularensis subsp. tularensis (strain FSC 198).